Here is a 536-residue protein sequence, read N- to C-terminus: Probable protein S-acyltransferase 23 (536 aa).

A disordered region spans residues 1–23 (MDSSEIEVVPLDSNSHQSPTESP). Residues 12–23 (DSNSHQSPTESP) show a composition bias toward polar residues. 6 ANK repeats span residues 57-86 (NGFY…DVNS), 90-119 (IQQT…RIEA), 123-153 (NGFR…DYNA), 157-186 (EGRS…CQNR), 190-219 (TGCT…KEEL), and 225-254 (TGST…TRKN). Helical transmembrane passes span 270 to 290 (YAPM…TSIV) and 298 to 318 (ITAM…YALI). One can recognise a DHHC domain in the interval 363 to 413 (QLCPTCKIIRPVRSKHCPTCKRCVEQFDHHCPWISNCVGKKNKRYFLVFVI). C393 (S-palmitoyl cysteine intermediate) is an active-site residue. 2 helical membrane passes run 407-427 (YFLV…TTAV) and 454-474 (AAVF…LTIS).

This sequence belongs to the DHHC palmitoyltransferase family. In terms of tissue distribution, expressed in roots, shoots, flowers and pollen.

The protein localises to the golgi apparatus membrane. It catalyses the reaction L-cysteinyl-[protein] + hexadecanoyl-CoA = S-hexadecanoyl-L-cysteinyl-[protein] + CoA. In terms of biological role, palmitoyl acyltransferase. This chain is Probable protein S-acyltransferase 23 (PAT23), found in Arabidopsis thaliana (Mouse-ear cress).